Here is a 100-residue protein sequence, read N- to C-terminus: Large ribosomal subunit protein eL21 (100 aa).

The segment at 1–21 (MVKRTHGYRYKSRKLLRKKPR) is disordered.

Belongs to the eukaryotic ribosomal protein eL21 family.

The protein is Large ribosomal subunit protein eL21 of Pyrobaculum islandicum (strain DSM 4184 / JCM 9189 / GEO3).